The chain runs to 411 residues: MMMMSLNSKQAFSMPHAGSLHVEPKYSALHSASPGSSAPAAPSASSPSSSSNAGGGGGGGGGGGGGGRSSSSSSSGSGGSGGGGGSEAMRRACLPTPPSNIFGGLDESLLARAEALAAVDIVSQSKSHHHHPPHHSPFKPDATYHTMNTIPCTSAASSSSVPISHPSALAGTHHHHHHHHHHHHQPHQALEGELLEHLSPGLALGAMAGPDGTVVSTPAHAPHMATMNPMHQAALSMAHAHGLPSHMGCMSDVDADPRDLEAFAERFKQRRIKLGVTQADVGSALANLKIPGVGSLSQSTICRFESLTLSHNNMIALKPILQAWLEEAEKSHREKLTKPELFNGAEKKRKRTSIAAPEKRSLEAYFAIQPRPSSEKIAAIAEKLDLKKNVVRVWFCNQRQKQKRMKYSAGI.

The segment at leucine 29–proline 95 is disordered. The span at serine 31–asparagine 52 shows a compositional bias: low complexity. 2 stretches are compositionally biased toward gly residues: residues alanine 53 to arginine 68 and glycine 76 to serine 86. A required for transcriptional activation region spans residues cysteine 93 to histidine 239. Residues arginine 112–isoleucine 121 carry the POU-IV box motif. Positions serine 154–alanine 168 are enriched in low complexity. The segment at serine 154–leucine 190 is disordered. Over residues threonine 172–proline 186 the composition is skewed to basic residues. The Nuclear speckle targeting signal motif lies at histidine 173–histidine 187. Residues alanine 240–isoleucine 411 are required for DNA-binding and transcriptional repression. The POU-specific domain maps to aspartate 252–glutamate 329. Residues lysine 347–lysine 406 constitute a DNA-binding region (homeobox).

This sequence belongs to the POU transcription factor family. Class-4 subfamily. Isoform 2: Interacts with POU4F1 isoform 1; this interaction inhibits both POU4F1 DNA-binding and transcriptional activities. Isoform 2: Interacts (C-terminus) with ESR1 (via DNA-binding domain); this interaction increases the estrogen receptor ESR1 transcriptional activity in a DNA- and ligand 17-beta-estradiol-independent manner. Isoform 2: Interacts (via C-terminus) with TP53 (via N-terminus). Interacts with DLX1 (via homeobox DNA-binding domain); this interaction suppresses DLX1-mediated transcriptional activity in postnatal retina enhancing retinal ganglion cell (RGC) differentiation. Interacts with DLX2 (via homeobox DNA-binding domain); this interaction enhances RGC differentiation. Isoform 1: Interacts (via C-terminus) with ISL1 (via C-terminus). Isoform 1: Interacts with ISL2. Isoform 1: Interacts with LHX2. Expressed in retinal ganglion cells (RGCs). Expressed in mature osteoclasts. Expressed in cells of layers of the superior colliculus and the adjacent periaqueductal gray (at protein level). Expressed in the brain, peripheral sensory nervous system and retina. Expressed in the optical, intermediate, and deep gray areas of the superior colliculus, the dorsal column of the mesencephalic and pontine central gray, and the lateral interpeduncular nucleus of the brain. Expressed predominantly in postmitotic, terminally differentiated neurons. Expressed in ganglion cell layer (GCL) of the retina.

The protein resides in the nucleus. Its subcellular location is the nucleus speckle. It localises to the cytoplasm. Functionally, tissue-specific DNA-binding transcription factor involved in the development and differentiation of target cells. Functions either as activator or repressor by modulating the rate of target gene transcription through RNA polymerase II enzyme in a promoter-dependent manner. Binds to the consensus octamer motif 5'-AT[A/T]A[T/A]T[A/T]A-3' of promoter of target genes. Plays a fundamental role in the gene regulatory network essential for retinal ganglion cell (RGC) differentiation. Binds to an octamer site to form a ternary complex with ISL1; cooperates positively with ISL1 and ISL2 to potentiate transcriptional activation of RGC target genes being involved in RGC fate commitment in the developing retina and RGC axon formation and pathfinding. Inhibits DLX1 and DLX2 transcriptional activities preventing DLX1- and DLX2-mediated ability to promote amacrine cell fate specification. In cooperation with TP53 potentiates transcriptional activation of BAX promoter activity increasing neuronal cell apoptosis. Negatively regulates BAX promoter activity in the absence of TP53. Acts as a transcriptional coactivator via its interaction with the transcription factor ESR1 by enhancing its effect on estrogen response element (ERE)-containing promoter. Antagonizes the transcriptional stimulatory activity of POU4F1 by preventing its binding to an octamer motif. Involved in TNFSF11-mediated terminal osteoclast differentiation. This is POU domain, class 4, transcription factor 2 from Mus musculus (Mouse).